The sequence spans 370 residues: Queuine tRNA-ribosyltransferase (370 aa).

Aspartate 89 functions as the Proton acceptor in the catalytic mechanism. Substrate-binding positions include 89–93 (DSGGF), aspartate 143, glutamine 187, and glycine 214. The segment at 245–251 (GVGKPEN) is RNA binding. The active-site Nucleophile is aspartate 264. Positions 269–273 (TRNAR) are RNA binding; important for wobble base 34 recognition. Zn(2+)-binding residues include cysteine 302, cysteine 304, cysteine 307, and histidine 333.

The protein belongs to the queuine tRNA-ribosyltransferase family. As to quaternary structure, homodimer. Within each dimer, one monomer is responsible for RNA recognition and catalysis, while the other monomer binds to the replacement base PreQ1. Zn(2+) serves as cofactor.

It carries out the reaction 7-aminomethyl-7-carbaguanine + guanosine(34) in tRNA = 7-aminomethyl-7-carbaguanosine(34) in tRNA + guanine. It functions in the pathway tRNA modification; tRNA-queuosine biosynthesis. Its function is as follows. Catalyzes the base-exchange of a guanine (G) residue with the queuine precursor 7-aminomethyl-7-deazaguanine (PreQ1) at position 34 (anticodon wobble position) in tRNAs with GU(N) anticodons (tRNA-Asp, -Asn, -His and -Tyr). Catalysis occurs through a double-displacement mechanism. The nucleophile active site attacks the C1' of nucleotide 34 to detach the guanine base from the RNA, forming a covalent enzyme-RNA intermediate. The proton acceptor active site deprotonates the incoming PreQ1, allowing a nucleophilic attack on the C1' of the ribose to form the product. After dissociation, two additional enzymatic reactions on the tRNA convert PreQ1 to queuine (Q), resulting in the hypermodified nucleoside queuosine (7-(((4,5-cis-dihydroxy-2-cyclopenten-1-yl)amino)methyl)-7-deazaguanosine). This chain is Queuine tRNA-ribosyltransferase, found in Hamiltonella defensa subsp. Acyrthosiphon pisum (strain 5AT).